Consider the following 180-residue polypeptide: ATP-dependent protease subunit HslV (180 aa).

Thr-7 is a catalytic residue. 3 residues coordinate Na(+): Gly-165, Cys-168, and Thr-171.

Belongs to the peptidase T1B family. HslV subfamily. In terms of assembly, a double ring-shaped homohexamer of HslV is capped on each side by a ring-shaped HslU homohexamer. The assembly of the HslU/HslV complex is dependent on binding of ATP.

The protein localises to the cytoplasm. The catalysed reaction is ATP-dependent cleavage of peptide bonds with broad specificity.. Its activity is regulated as follows. Allosterically activated by HslU binding. Its function is as follows. Protease subunit of a proteasome-like degradation complex believed to be a general protein degrading machinery. This Bacillus cereus (strain ATCC 10987 / NRS 248) protein is ATP-dependent protease subunit HslV.